The following is a 546-amino-acid chain: Chaperonin GroEL 2 (546 aa).

ATP contacts are provided by residues 29–32 (TLGP), 86–90 (DGTTT), G418, 482–484 (NAA), and D498.

It belongs to the chaperonin (HSP60) family. In terms of assembly, forms a cylinder of 14 subunits composed of two heptameric rings stacked back-to-back. Interacts with the co-chaperonin GroES.

The protein localises to the cytoplasm. The catalysed reaction is ATP + H2O + a folded polypeptide = ADP + phosphate + an unfolded polypeptide.. Together with its co-chaperonin GroES, plays an essential role in assisting protein folding. The GroEL-GroES system forms a nano-cage that allows encapsulation of the non-native substrate proteins and provides a physical environment optimized to promote and accelerate protein folding. The sequence is that of Chaperonin GroEL 2 from Corynebacterium diphtheriae (strain ATCC 700971 / NCTC 13129 / Biotype gravis).